Reading from the N-terminus, the 387-residue chain is O-phospho-L-seryl-tRNA:Cys-tRNA synthase 2 (387 aa).

Pyridoxal 5'-phosphate is bound by residues 89-90 (AR), N196, and 219-221 (SGH). At K222 the chain carries N6-(pyridoxal phosphate)lysine.

Belongs to the SepCysS family. As to quaternary structure, homodimer. Interacts with SepRS. It depends on pyridoxal 5'-phosphate as a cofactor.

The catalysed reaction is O-phospho-L-seryl-tRNA(Cys) + hydrogen sulfide + H(+) = L-cysteinyl-tRNA(Cys) + phosphate. Its function is as follows. Converts O-phospho-L-seryl-tRNA(Cys) (Sep-tRNA(Cys)) to L-cysteinyl-tRNA(Cys) (Cys-tRNA(Cys)). The polypeptide is O-phospho-L-seryl-tRNA:Cys-tRNA synthase 2 (Methanococcoides burtonii (strain DSM 6242 / NBRC 107633 / OCM 468 / ACE-M)).